Reading from the N-terminus, the 500-residue chain is Zinc finger protein 689 (500 aa).

The tract at residues 1–24 (MAPPSAPLLEQAPGEVGPTRRRGR) is disordered. The KRAB domain maps to 29–100 (LKFADVAVYF…AALDPQEYRR (72 aa)). Positions 110 to 144 (TRQKNEEKEVFPPKDVPRKGKRGRKPSKPRLIARQ) are disordered. Over residues 112 to 127 (QKNEEKEVFPPKDVPR) the composition is skewed to basic and acidic residues. Basic residues predominate over residues 128 to 137 (KGKRGRKPSK). Residues 149-171 (PICPDCGCTFPDLPALESHKCAQ) form a C2H2-type 1; degenerate zinc finger. C2H2-type zinc fingers lie at residues 177 to 199 (YPCP…RRAH), 205 to 227 (YVCD…QVIH), 233 to 255 (YHCP…RTTH), 261 to 283 (HQCP…QRTH), 289 to 311 (YTCL…QRIH), 317 to 339 (YPCP…RRVH), 345 to 367 (YACE…QLLH), 373 to 395 (YPCP…RSTH), 401 to 423 (HACD…RRVH), and 429 to 451 (YACD…QLLH). Residue Lys455 forms a Glycyl lysine isopeptide (Lys-Gly) (interchain with G-Cter in SUMO2) linkage. The C2H2-type 12 zinc-finger motif lies at 457-482 (FPCLECGRCFRQRWSLAVHKCCPNTH).

The protein belongs to the krueppel C2H2-type zinc-finger protein family.

The protein localises to the nucleus. Functionally, may be involved in transcriptional regulation. This is Zinc finger protein 689 (Znf689) from Rattus norvegicus (Rat).